A 152-amino-acid chain; its full sequence is Transcriptional regulator MraZ (152 aa).

SpoVT-AbrB domains lie at 5 to 52 and 81 to 124; these read ASAI…PLDE and AHEC…DETA.

It belongs to the MraZ family. Forms oligomers.

The protein resides in the cytoplasm. Its subcellular location is the nucleoid. This is Transcriptional regulator MraZ from Shewanella woodyi (strain ATCC 51908 / MS32).